The chain runs to 139 residues: MTTQPSKQLETFENPVQTRDYRIHMEIPEFTCLCPKTGQPDFARLTLDYIPDKKCIELKSLKLYIWSYRDEGAFHEAVTNRILDDLVAAMKPRFIRLTSKFYVRGGIFTNVVAEHRKKGWQPQPPVLLEVFEQQFNTHG.

Catalysis depends on Cys-34, which acts as the Thioimide intermediate. The active-site Proton donor is Asp-41. Substrate-binding positions include 56–58 (IEL) and 75–76 (HE).

It belongs to the GTP cyclohydrolase I family. QueF type 1 subfamily.

It localises to the cytoplasm. It carries out the reaction 7-aminomethyl-7-carbaguanine + 2 NADP(+) = 7-cyano-7-deazaguanine + 2 NADPH + 3 H(+). It participates in tRNA modification; tRNA-queuosine biosynthesis. In terms of biological role, catalyzes the NADPH-dependent reduction of 7-cyano-7-deazaguanine (preQ0) to 7-aminomethyl-7-deazaguanine (preQ1). The sequence is that of NADPH-dependent 7-cyano-7-deazaguanine reductase from Nitrosomonas europaea (strain ATCC 19718 / CIP 103999 / KCTC 2705 / NBRC 14298).